The sequence spans 240 residues: Thiopurine S-methyltransferase (240 aa).

24-35 provides a ligand contact to S-adenosyl-L-methionine; sequence WKDKWVTRHISF. Phe35 is a substrate binding site. Residue Lys53 is modified to N6-acetyllysine. Residues Leu64, Glu85, 129–130, and Arg147 contribute to the S-adenosyl-L-methionine site; that span reads SI.

Belongs to the class I-like SAM-binding methyltransferase superfamily. TPMT family. In terms of assembly, monomer.

It is found in the cytoplasm. The enzyme catalyses S-adenosyl-L-methionine + a thiopurine = S-adenosyl-L-homocysteine + a thiopurine S-methylether.. It carries out the reaction mercaptopurine + S-adenosyl-L-methionine = 6-methylthiopurine + S-adenosyl-L-homocysteine + H(+). Functionally, catalyzes the S-methylation of thiopurine drugs such as 6-mercaptopurine (also called mercaptopurine, 6-MP or its brand name Purinethol) using S-adenosyl-L-methionine as the methyl donor. TPMT activity modulates the cytotoxic effects of thiopurine prodrugs. A natural substrate for this enzyme has yet to be identified. The protein is Thiopurine S-methyltransferase (Tpmt) of Mus spretus (Western Mediterranean mouse).